The following is a 190-amino-acid chain: dTTP/UTP pyrophosphatase (190 aa).

D71 acts as the Proton acceptor in catalysis.

It belongs to the Maf family. YhdE subfamily. It depends on a divalent metal cation as a cofactor.

Its subcellular location is the cytoplasm. The catalysed reaction is dTTP + H2O = dTMP + diphosphate + H(+). It carries out the reaction UTP + H2O = UMP + diphosphate + H(+). Functionally, nucleoside triphosphate pyrophosphatase that hydrolyzes dTTP and UTP. May have a dual role in cell division arrest and in preventing the incorporation of modified nucleotides into cellular nucleic acids. The sequence is that of dTTP/UTP pyrophosphatase from Xanthomonas oryzae pv. oryzae (strain MAFF 311018).